A 148-amino-acid polypeptide reads, in one-letter code: Endothelial differentiation-related factor 1 homolog (148 aa).

A disordered region spans residues 1–26; that stretch reads MAESDWDTVTVLRKKGPSAAQAKSKQ. The 55-residue stretch at 81-135 folds into the HTH cro/C1-type domain; it reads IQQGRQSKGMTQKDLATKINEKPQVIADYESGRAIPNNQVMGKIERAIGLKLRGK. Residues 92–111 constitute a DNA-binding region (H-T-H motif); that stretch reads QKDLATKINEKPQVIADYES.

It is found in the nucleus. Functionally, probable transcriptional coactivator. The chain is Endothelial differentiation-related factor 1 homolog (EDF1) from Gallus gallus (Chicken).